Reading from the N-terminus, the 511-residue chain is Zinc finger CCCH-type with G patch domain-containing protein (511 aa).

The segment at 157–180 (PCSYYLEGECRFDEARCRYSHGAL) adopts a C3H1-type zinc-finger fold. The segment at 254 to 281 (DQEDELTSEDSSSVNDGSSDEEESDMDD) is disordered. Over residues 271-281 (SSDEEESDMDD) the composition is skewed to acidic residues. The 47-residue stretch at 311-357 (TRGIGSKLMEKMGYIHGTGLGSDGRGIVTPVSAQILPKGRSLDACME) folds into the G-patch domain. Disordered regions lie at residues 409–433 (GSDN…QHST) and 478–511 (MHNQ…MFEF). The span at 414 to 425 (QQAEPEAKKAKA) shows a compositional bias: basic and acidic residues. Positions 478–493 (MHNQKQELATLQAQER) are enriched in polar residues. Over residues 494 to 511 (SLSKEQQTRKSKNKMFEF) the composition is skewed to basic and acidic residues.

It is found in the nucleus. Functionally, transcription repressor. This chain is Zinc finger CCCH-type with G patch domain-containing protein, found in Drosophila ananassae (Fruit fly).